Reading from the N-terminus, the 270-residue chain is Phosphatidylglycerol--prolipoprotein diacylglyceryl transferase (270 aa).

4 helical membrane passes run 19–39 (FPVYWYGIIIGTGVLLGLWLA), 56–76 (LVLIAVPIAILFARMYYVIFE), 92–112 (QGGLAIHGGLIGAVITGILFA), and 116–136 (GVSFWKLADIAAPSILLGQAI). An a 1,2-diacyl-sn-glycero-3-phospho-(1'-sn-glycerol)-binding site is contributed by R138. A run of 3 helical transmembrane segments spans residues 178–198 (HPTFLYESLWNFAGVILLLAL), 206–226 (GELFFTYLIWYSIGRFFVEGL), and 236–256 (LRIAQVMSIGLVVISIIFIIV).

Belongs to the Lgt family.

It is found in the cell membrane. The enzyme catalyses L-cysteinyl-[prolipoprotein] + a 1,2-diacyl-sn-glycero-3-phospho-(1'-sn-glycerol) = an S-1,2-diacyl-sn-glyceryl-L-cysteinyl-[prolipoprotein] + sn-glycerol 1-phosphate + H(+). The protein operates within protein modification; lipoprotein biosynthesis (diacylglyceryl transfer). Catalyzes the transfer of the diacylglyceryl group from phosphatidylglycerol to the sulfhydryl group of the N-terminal cysteine of a prolipoprotein, the first step in the formation of mature lipoproteins. This Bacillus cereus (strain ZK / E33L) protein is Phosphatidylglycerol--prolipoprotein diacylglyceryl transferase.